A 448-amino-acid polypeptide reads, in one-letter code: Putative diacyglycerol O-acyltransferase MT3848 (448 aa).

Catalysis depends on histidine 136, which acts as the Proton acceptor.

It belongs to the long-chain O-acyltransferase family.

It carries out the reaction an acyl-CoA + a 1,2-diacyl-sn-glycerol = a triacyl-sn-glycerol + CoA. It functions in the pathway glycerolipid metabolism; triacylglycerol biosynthesis. This chain is Putative diacyglycerol O-acyltransferase MT3848, found in Mycobacterium tuberculosis (strain CDC 1551 / Oshkosh).